A 745-amino-acid polypeptide reads, in one-letter code: Heterogeneous nuclear ribonucleoprotein U-like protein 2 (745 aa).

The 35-residue stretch at 3 to 37 (VKRLKVTELRSELQRRGLDSRGLKMDLAQRLQEAL) folds into the SAP domain. Disordered regions lie at residues 44–239 (DEAG…DEEE) and 625–664 (EEAR…GQRR). The span at 73 to 97 (GDEEEEDDDEEEDEEALLEDEDEEP) shows a compositional bias: acidic residues. Basic and acidic residues predominate over residues 142-161 (GEEHDNGKGEEDGPEERSGD). The residue at position 159 (S159) is a Phosphoserine. T163 bears the Phosphothreonine mark. Residues S166, S183, S186, S224, and S226 each carry the phosphoserine modification. The segment covering 183-221 (SEKSKPAGSDGERRGVKRQRDEKDEHGRAYYEFREEAYH) has biased composition (basic and acidic residues). A B30.2/SPRY domain is found at 224-417 (SKSPPPPEEE…VELNFGQKEE (194 aa)). Residues 230–239 (PEEEAKDEEE) are compositionally biased toward acidic residues. The segment covering 625–637 (EEARKLLPPSEKR) has biased composition (basic and acidic residues). Over residues 638-652 (TNRRNNRNKRNRQNR) the composition is skewed to basic residues. R654, R682, R736, and R745 each carry omega-N-methylarginine.

Binds to MLF1 and retains it in the nucleus.

It is found in the nucleus. This chain is Heterogeneous nuclear ribonucleoprotein U-like protein 2 (Hnrnpul2), found in Mus musculus (Mouse).